Here is a 961-residue protein sequence, read N- to C-terminus: Phosphofurin acidic cluster sorting protein 1 (961 aa).

The span at 1–19 (MAERGGAGGGPGGAGGGSS) shows a compositional bias: gly residues. 2 disordered regions span residues 1 to 70 (MAER…SSST) and 76 to 95 (VAVA…RTPA). An N-acetylalanine modification is found at Ala2. Over residues 20–30 (QRGSGVAQSPQ) the composition is skewed to low complexity. Residue Ser28 is modified to Phosphoserine. Pro residues predominate over residues 31-46 (QQPPQQPSQPQQPTPP). At Thr44 the chain carries Phosphothreonine. Residues 51-70 (ATSSSSSTSAAAASSSSSST) show a composition bias toward low complexity. Position 249 is a phosphotyrosine (Tyr249). The span at 260-271 (GIKSKLSDRSPD) shows a compositional bias: basic and acidic residues. 2 disordered regions span residues 260–297 (GIKS…LHGQ) and 375–426 (NPSD…GKDT). Over residues 274 to 291 (NYSEEEEESFSSEQEGSD) the composition is skewed to acidic residues. A coiled-coil region spans residues 351–375 (HVSREQIREVEEDLDELYDSLEMYN). Phosphoserine is present on residues Ser377 and Ser379. A compositionally biased stretch (polar residues) spans 404–426 (MSQSSSQTEIGSLNSKGSLGKDT). A phosphoserine mark is found at Ser428 and Ser493. Disordered stretches follow at residues 475-540 (EKVK…HSTQ) and 758-802 (SPST…SMSS). Thr502 carries the phosphothreonine modification. Residues Ser517, Ser526, Ser527, Ser529, and Ser532 each carry the phosphoserine modification. Residues 768–802 (SPVVSLTVPSTSPPSSSGLSRDATATPPSSPSMSS) are compositionally biased toward low complexity.

It belongs to the PACS family. Associates with AP-1 and AP-3 but not with AP-2 complexes. Interacts with FURIN. Forms a ternary complex with furin and AP-1. Interacts with PKD2 (via acidic region). Interacts with SORL1. Interacts with WDR37.

The protein localises to the golgi apparatus. Its subcellular location is the trans-Golgi network. Functionally, coat protein that is involved in the localization of trans-Golgi network (TGN) membrane proteins that contain acidic cluster sorting motifs. Controls the endosome-to-Golgi trafficking of furin and mannose-6-phosphate receptor by connecting the acidic-cluster-containing cytoplasmic domain of these molecules with the adapter-protein complex-1 (AP-1) of endosomal clathrin-coated membrane pits. Required for normal ER Ca2+ handling in lymphocytes. Together with WDR37, it plays an essential role in lymphocyte development, quiescence and survival. Required for stabilizing peripheral lymphocyte populations. In Rattus norvegicus (Rat), this protein is Phosphofurin acidic cluster sorting protein 1 (Pacs1).